The primary structure comprises 241 residues: 2-C-methyl-D-erythritol 4-phosphate cytidylyltransferase (241 aa).

It belongs to the IspD/TarI cytidylyltransferase family. IspD subfamily.

The catalysed reaction is 2-C-methyl-D-erythritol 4-phosphate + CTP + H(+) = 4-CDP-2-C-methyl-D-erythritol + diphosphate. Its pathway is isoprenoid biosynthesis; isopentenyl diphosphate biosynthesis via DXP pathway; isopentenyl diphosphate from 1-deoxy-D-xylulose 5-phosphate: step 2/6. In terms of biological role, catalyzes the formation of 4-diphosphocytidyl-2-C-methyl-D-erythritol from CTP and 2-C-methyl-D-erythritol 4-phosphate (MEP). The protein is 2-C-methyl-D-erythritol 4-phosphate cytidylyltransferase of Pseudoalteromonas translucida (strain TAC 125).